Consider the following 918-residue polypeptide: Protein SEY1 homolog (918 aa).

Over 1-701 (MESSNHLPNK…AGTSVSSWRN (701 aa)) the chain is Cytoplasmic. Residues 46–280 (GFKFNVVTIL…VPSDGFFVYS (235 aa)) enclose the GB1/RHD3-type G domain. 56 to 63 (GSQSSGKS) contacts GTP. A coiled-coil region spans residues 554 to 626 (SLVLLLKATQ…DALTLLQVLK (73 aa)). A helical membrane pass occupies residues 702–722 (IPPVFWLVLLVLGWNELRAAF). Residues 723 to 725 (RVL) lie on the Lumenal side of the membrane. Residues 726–746 (LKFYILIPLLIVSYFTFSYSA) traverse the membrane as a helical segment. Residues 747-918 (NKLLGPKANE…CGKAVHLAQW (172 aa)) lie on the Cytoplasmic side of the membrane.

This sequence belongs to the TRAFAC class dynamin-like GTPase superfamily. GB1/RHD3 GTPase family. RHD3 subfamily.

The protein localises to the endoplasmic reticulum membrane. In terms of biological role, probable GTP-binding protein that may be involved in cell development. The protein is Protein SEY1 homolog of Theileria annulata.